The following is a 102-amino-acid chain: Large ribosomal subunit protein eL31 (102 aa).

The protein belongs to the eukaryotic ribosomal protein eL31 family.

This Staphylothermus marinus (strain ATCC 43588 / DSM 3639 / JCM 9404 / F1) protein is Large ribosomal subunit protein eL31.